A 1543-amino-acid polypeptide reads, in one-letter code: Rho guanine nucleotide exchange factor 12 (1543 aa).

The tract at residues 1 to 62 is disordered; that stretch reads MSGTQSTITD…KTKSSSEESR (62 aa). An N-acetylserine modification is found at S2. Residues 28-45 show a composition bias toward basic and acidic residues; it reads SPTDKKQKVERSSSHDFD. A Phosphoserine modification is found at S41. Positions 72–151 constitute a PDZ domain; it reads CVIIQKDDNG…LTVQGRPPGS (80 aa). The stretch at 194 to 262 forms a coiled coil; it reads VGEENNVVHN…LSKATGSAQD (69 aa). Residues 281–355 are disordered; it reads AEADPGDGLC…GAPHIIGAED (75 aa). Low complexity predominate over residues 293 to 312; sequence DWSSGDASRPSSDSADSPKS. S309 carries the phosphoserine modification. The segment covering 313–329 has biased composition (basic and acidic residues); that stretch reads SLRERSYLEEAPERSEG. A Phosphoserine modification is found at S341. The region spanning 367–558 is the RGSL domain; it reads GQCSCFQSIE…LMYMKYLGVK (192 aa). The disordered stretch occupies residues 574–710; sequence FLPKIKQSMK…DSTPRVPTTV (137 aa). Residues 582–592 show a composition bias toward basic and acidic residues; it reads MKKDREGEEKG. A Phosphoserine modification is found at S637. The segment covering 663–676 has biased composition (low complexity); the sequence is ASSMSSATSGTALS. T736 carries the phosphothreonine modification. The 191-residue stretch at 787 to 977 folds into the DH domain; the sequence is KRQEVINELF…RQILNYVNQA (191 aa). Positions 981–1004 form a coiled coil; it reads AENKQRLEDYQRRLDTSNLKLSEY. Residues 1019–1132 enclose the PH domain; it reads KMIHEGPLVW…WQDLICRMAA (114 aa). Positions 1137-1158 are disordered; sequence QSTKPIPLPQPPPCEGDNDEEE. A phosphoserine mark is found at S1288, S1327, and S1377. Disordered regions lie at residues 1386–1405 and 1441–1468; these read EAHSDDNPSEGDGAVKKEEK and PVTGIPAVDSSHQQQHSPQNVHPEGPVS. Residues 1450 to 1460 are compositionally biased toward polar residues; it reads SSHQQQHSPQN. Residues S1457 and S1540 each carry the phosphoserine modification.

Interacts with GNA12 and GNA13, probably through the RGS-like domain, with RHOA, PLXNB1 and PLXNB2, and through its PDZ domain with IGF1R beta subunit. Interacts with GCSAM. Found in a complex with ARHGEF11 and ARHGEF12; binding to ARHGEF11 and ARHGEF12 enhances CDC42 GEF activity of PLEKHG4B, and PLEKHG4B, in turn, inhibits ARHGEF11- and ARHGEF12-mediated RHOA activation. As to expression, expressed in brain, predominantly in neuronal cell bodies.

Its subcellular location is the cytoplasm. The protein localises to the membrane. Functionally, may play a role in the regulation of RhoA GTPase by guanine nucleotide-binding alpha-12 (GNA12) and alpha-13 (GNA13). Acts as guanine nucleotide exchange factor (GEF) for RhoA GTPase and may act as GTPase-activating protein (GAP) for GNA12 and GNA13. The sequence is that of Rho guanine nucleotide exchange factor 12 (Arhgef12) from Mus musculus (Mouse).